Consider the following 260-residue polypeptide: 4-hydroxy-tetrahydrodipicolinate reductase (260 aa).

Residues glycine 12–methionine 17, glycine 92–threonine 94, and alanine 118–phenylalanine 121 contribute to the NAD(+) site. The active-site Proton donor/acceptor is the histidine 148. (S)-2,3,4,5-tetrahydrodipicolinate is bound at residue histidine 149. Residue lysine 152 is the Proton donor of the active site. Residue glycine 158–threonine 159 coordinates (S)-2,3,4,5-tetrahydrodipicolinate.

This sequence belongs to the DapB family.

Its subcellular location is the cytoplasm. It catalyses the reaction (S)-2,3,4,5-tetrahydrodipicolinate + NAD(+) + H2O = (2S,4S)-4-hydroxy-2,3,4,5-tetrahydrodipicolinate + NADH + H(+). The enzyme catalyses (S)-2,3,4,5-tetrahydrodipicolinate + NADP(+) + H2O = (2S,4S)-4-hydroxy-2,3,4,5-tetrahydrodipicolinate + NADPH + H(+). It functions in the pathway amino-acid biosynthesis; L-lysine biosynthesis via DAP pathway; (S)-tetrahydrodipicolinate from L-aspartate: step 4/4. Its function is as follows. Catalyzes the conversion of 4-hydroxy-tetrahydrodipicolinate (HTPA) to tetrahydrodipicolinate. The protein is 4-hydroxy-tetrahydrodipicolinate reductase of Lactococcus lactis subsp. cremoris (strain SK11).